The chain runs to 409 residues: uncharacterized protein (409 aa).

A signal peptide spans 1 to 29; sequence MARSRCVHRVVHQAACIGVIGLSTSALTT. A lipid anchor (N-palmitoyl cysteine) is attached at Cys30. Cys30 carries S-diacylglycerol cysteine lipidation.

The protein belongs to the TP013X lipoprotein family.

It is found in the cell membrane. This is an uncharacterized protein from Treponema pallidum (strain Nichols).